The primary structure comprises 414 residues: Esterase FrsA (414 aa).

The protein belongs to the FrsA family.

The enzyme catalyses a carboxylic ester + H2O = an alcohol + a carboxylate + H(+). Functionally, catalyzes the hydrolysis of esters. The chain is Esterase FrsA from Enterobacter sp. (strain 638).